We begin with the raw amino-acid sequence, 610 residues long: Elongation factor 4 (610 aa).

Residues 15–197 (KSIRNFSIIA…RIINDIPYPK (183 aa)) enclose the tr-type G domain. GTP-binding positions include 27-32 (DHGKST) and 144-147 (NKID).

This sequence belongs to the TRAFAC class translation factor GTPase superfamily. Classic translation factor GTPase family. LepA subfamily.

The protein resides in the cell membrane. It carries out the reaction GTP + H2O = GDP + phosphate + H(+). Required for accurate and efficient protein synthesis under certain stress conditions. May act as a fidelity factor of the translation reaction, by catalyzing a one-codon backward translocation of tRNAs on improperly translocated ribosomes. Back-translocation proceeds from a post-translocation (POST) complex to a pre-translocation (PRE) complex, thus giving elongation factor G a second chance to translocate the tRNAs correctly. Binds to ribosomes in a GTP-dependent manner. The sequence is that of Elongation factor 4 from Buchnera aphidicola subsp. Acyrthosiphon pisum (strain 5A).